Reading from the N-terminus, the 90-residue chain is Small ribosomal subunit protein bS20 (90 aa).

A disordered region spans residues 1 to 28 (MPNTSSASKRLRQNEKRRLLNRATRSNM).

This sequence belongs to the bacterial ribosomal protein bS20 family.

Binds directly to 16S ribosomal RNA. This Rhodopirellula baltica (strain DSM 10527 / NCIMB 13988 / SH1) protein is Small ribosomal subunit protein bS20.